The chain runs to 206 residues: Peptidyl-tRNA hydrolase (206 aa).

Y19 is a binding site for tRNA. H24 serves as the catalytic Proton acceptor. The tRNA site is built by F70, N72, and N118.

It belongs to the PTH family. As to quaternary structure, monomer.

It localises to the cytoplasm. It catalyses the reaction an N-acyl-L-alpha-aminoacyl-tRNA + H2O = an N-acyl-L-amino acid + a tRNA + H(+). In terms of biological role, hydrolyzes ribosome-free peptidyl-tRNAs (with 1 or more amino acids incorporated), which drop off the ribosome during protein synthesis, or as a result of ribosome stalling. Its function is as follows. Catalyzes the release of premature peptidyl moieties from peptidyl-tRNA molecules trapped in stalled 50S ribosomal subunits, and thus maintains levels of free tRNAs and 50S ribosomes. The sequence is that of Peptidyl-tRNA hydrolase from Synechococcus sp. (strain CC9902).